Here is a 276-residue protein sequence, read N- to C-terminus: MVKGPGLYTEIGKKARDLLYKDHNSDQKFSITTFSPAGVAITSTGTKKGDLLLGDVAFQSRRKNITTDLKVCTDSTFLITATVDEAAPGLRSIFSFKVPDQNSGKVELQYLHEYAGISTSMGLTQNPTVNFSGVIGSNVLAVGTDVSFDTKSGNFTKINAGLSFTKEDLIASLTVNDKGDLLNASYYHIVNPLFNTAVGAEVSHKLSSKDSTITVGTQHSLDPLTSVKARVNSAGIASALIQHEWKPKSFFTISGEVDTKSIDKSAKVGLALALKP.

This sequence belongs to the eukaryotic mitochondrial porin (TC 1.B.8.1) family. In terms of tissue distribution, expressed in shoot meristems, root meristematic zone, lateral roots, leaves, stigma and anthers.

The protein resides in the mitochondrion outer membrane. In terms of biological role, forms a channel through the mitochondrial outer membrane that allows diffusion of small hydrophilic molecules. The channel adopts an open conformation at low or zero membrane potential and a closed conformation at potentials above 30-40 mV. The open state has a weak anion selectivity whereas the closed state is cation-selective. Involved in plant development at reproductive stage, is important for pollen development and may regulate hydrogen peroxide generation during disease resistance. The polypeptide is Mitochondrial outer membrane protein porin 1 (VDAC1) (Arabidopsis thaliana (Mouse-ear cress)).